We begin with the raw amino-acid sequence, 286 residues long: Pantothenate synthetase (286 aa).

Position 30-37 (30-37 (MGFLHEGH)) interacts with ATP. His37 functions as the Proton donor in the catalytic mechanism. A (R)-pantoate-binding site is contributed by Gln61. Gln61 contributes to the beta-alanine binding site. 147–150 (GLKD) contributes to the ATP binding site. Gln153 serves as a coordination point for (R)-pantoate. Residues Val176 and 184-187 (KSSR) contribute to the ATP site.

It belongs to the pantothenate synthetase family. In terms of assembly, homodimer.

It localises to the cytoplasm. The enzyme catalyses (R)-pantoate + beta-alanine + ATP = (R)-pantothenate + AMP + diphosphate + H(+). Its pathway is cofactor biosynthesis; (R)-pantothenate biosynthesis; (R)-pantothenate from (R)-pantoate and beta-alanine: step 1/1. Catalyzes the condensation of pantoate with beta-alanine in an ATP-dependent reaction via a pantoyl-adenylate intermediate. This chain is Pantothenate synthetase, found in Bacillus subtilis (strain 168).